Here is a 499-residue protein sequence, read N- to C-terminus: Glutamyl-tRNA(Gln) amidotransferase subunit A (499 aa).

Active-site charge relay system residues include Lys-80 and Ser-155. Residue Ser-179 is the Acyl-ester intermediate of the active site.

The protein belongs to the amidase family. GatA subfamily. As to quaternary structure, heterotrimer of A, B and C subunits.

It carries out the reaction L-glutamyl-tRNA(Gln) + L-glutamine + ATP + H2O = L-glutaminyl-tRNA(Gln) + L-glutamate + ADP + phosphate + H(+). Functionally, allows the formation of correctly charged Gln-tRNA(Gln) through the transamidation of misacylated Glu-tRNA(Gln) in organisms which lack glutaminyl-tRNA synthetase. The reaction takes place in the presence of glutamine and ATP through an activated gamma-phospho-Glu-tRNA(Gln). The sequence is that of Glutamyl-tRNA(Gln) amidotransferase subunit A from Cupriavidus metallidurans (strain ATCC 43123 / DSM 2839 / NBRC 102507 / CH34) (Ralstonia metallidurans).